A 158-amino-acid polypeptide reads, in one-letter code: Cyclic pyranopterin monophosphate synthase (158 aa).

Residues 74 to 76 (MCH) and 112 to 113 (ME) each bind substrate. Asp-127 is an active-site residue.

It belongs to the MoaC family. In terms of assembly, homohexamer; trimer of dimers.

It carries out the reaction (8S)-3',8-cyclo-7,8-dihydroguanosine 5'-triphosphate = cyclic pyranopterin phosphate + diphosphate. It participates in cofactor biosynthesis; molybdopterin biosynthesis. Catalyzes the conversion of (8S)-3',8-cyclo-7,8-dihydroguanosine 5'-triphosphate to cyclic pyranopterin monophosphate (cPMP). In Helicobacter pylori (strain HPAG1), this protein is Cyclic pyranopterin monophosphate synthase.